Consider the following 452-residue polypeptide: tRNA modification GTPase MnmE (452 aa).

(6S)-5-formyl-5,6,7,8-tetrahydrofolate contacts are provided by Arg21, Glu78, and Lys118. Residues 214–375 (GMKVVIAGRP…LREHLKQAMG (162 aa)) enclose the TrmE-type G domain. Asn224 is a K(+) binding site. GTP-binding positions include 224-229 (NAGKSS), 243-249 (TDIAGTT), and 268-271 (DTAG). Ser228 is a Mg(2+) binding site. The K(+) site is built by Thr243, Ile245, and Thr248. Thr249 serves as a coordination point for Mg(2+). (6S)-5-formyl-5,6,7,8-tetrahydrofolate is bound at residue Lys452.

This sequence belongs to the TRAFAC class TrmE-Era-EngA-EngB-Septin-like GTPase superfamily. TrmE GTPase family. As to quaternary structure, homodimer. Heterotetramer of two MnmE and two MnmG subunits. Requires K(+) as cofactor.

It localises to the cytoplasm. Functionally, exhibits a very high intrinsic GTPase hydrolysis rate. Involved in the addition of a carboxymethylaminomethyl (cmnm) group at the wobble position (U34) of certain tRNAs, forming tRNA-cmnm(5)s(2)U34. In Haemophilus influenzae (strain ATCC 51907 / DSM 11121 / KW20 / Rd), this protein is tRNA modification GTPase MnmE.